The primary structure comprises 324 residues: Glyoxylate/hydroxypyruvate reductase B (324 aa).

Residues Arg237 and Glu266 contribute to the active site. The Proton donor role is filled by His285.

Belongs to the D-isomer specific 2-hydroxyacid dehydrogenase family. GhrB subfamily. Homodimer.

The protein resides in the cytoplasm. The catalysed reaction is glycolate + NADP(+) = glyoxylate + NADPH + H(+). It carries out the reaction (R)-glycerate + NAD(+) = 3-hydroxypyruvate + NADH + H(+). The enzyme catalyses (R)-glycerate + NADP(+) = 3-hydroxypyruvate + NADPH + H(+). Its function is as follows. Catalyzes the NADPH-dependent reduction of glyoxylate and hydroxypyruvate into glycolate and glycerate, respectively. This Salmonella paratyphi A (strain ATCC 9150 / SARB42) protein is Glyoxylate/hydroxypyruvate reductase B.